The following is a 158-amino-acid chain: Protein-export protein SecB (158 aa).

This sequence belongs to the SecB family. In terms of assembly, homotetramer, a dimer of dimers. One homotetramer interacts with 1 SecA dimer.

The protein resides in the cytoplasm. Its function is as follows. One of the proteins required for the normal export of preproteins out of the cell cytoplasm. It is a molecular chaperone that binds to a subset of precursor proteins, maintaining them in a translocation-competent state. It also specifically binds to its receptor SecA. This is Protein-export protein SecB from Yersinia pestis (strain Pestoides F).